The following is a 390-amino-acid chain: GTPase Obg (390 aa).

Residues 1-159 form the Obg domain; sequence MKFVDEASIL…RELLLELMLL (159 aa). Positions 127-147 are disordered; the sequence is NTRFKSSVNRTPRQKTNGTPG. Residues 129–145 show a composition bias toward polar residues; sequence RFKSSVNRTPRQKTNGT. Residues 160–333 form the OBG-type G domain; that stretch reads ADVGMLGMPN…LCWDVMTFII (174 aa). Residues 166-173, 191-195, 213-216, 283-286, and 314-316 each bind GTP; these read GMPNAGKS, FTTLV, DIPG, NKID, and SAA. Mg(2+)-binding residues include Ser173 and Thr193.

The protein belongs to the TRAFAC class OBG-HflX-like GTPase superfamily. OBG GTPase family. Monomer. It depends on Mg(2+) as a cofactor.

It is found in the cytoplasm. Functionally, an essential GTPase which binds GTP, GDP and possibly (p)ppGpp with moderate affinity, with high nucleotide exchange rates and a fairly low GTP hydrolysis rate. Plays a role in control of the cell cycle, stress response, ribosome biogenesis and in those bacteria that undergo differentiation, in morphogenesis control. The sequence is that of GTPase Obg from Shigella dysenteriae serotype 1 (strain Sd197).